The following is a 425-amino-acid chain: Perilipin-2 (425 aa).

Ala-2 is modified (N-acetylalanine). Phosphoserine is present on Ser-213. Position 230 is a phosphotyrosine (Tyr-230).

Belongs to the perilipin family. As to quaternary structure, interacts with IRGC. Post-translationally, acylated; primarily with C14, C16 and C18 fatty acids. In terms of processing, phosphorylation at Tyr-230 by isoform 1 of CHKA (CHKalpha2) promotes dissociation from lipid droplets: dissociation is followed by recruitment of autophagosome machinery to lipid droplets and subsequent lipid droplet lipolysis. Polyubiquitination of Nt-acetylatable A-PLIN2 by MARCHF6 lead to degradation by 26S proteasomes. Adipose tissue specific. Expressed abundantly and preferentially in fat pads.

The protein resides in the membrane. It localises to the lipid droplet. In terms of biological role, structural component of lipid droplets, which is required for the formation and maintenance of lipid storage droplets. This Mus musculus (Mouse) protein is Perilipin-2.